A 431-amino-acid chain; its full sequence is 5-methylthioadenosine/S-adenosylhomocysteine deaminase (431 aa).

The Zn(2+) site is built by H61 and H63. The substrate site is built by E90 and H183. H210 lines the Zn(2+) pocket. Residues E213 and D298 each coordinate substrate. Residue D298 coordinates Zn(2+).

It belongs to the metallo-dependent hydrolases superfamily. MTA/SAH deaminase family. The cofactor is Zn(2+).

The enzyme catalyses S-adenosyl-L-homocysteine + H2O + H(+) = S-inosyl-L-homocysteine + NH4(+). It carries out the reaction S-methyl-5'-thioadenosine + H2O + H(+) = S-methyl-5'-thioinosine + NH4(+). In terms of biological role, catalyzes the deamination of 5-methylthioadenosine and S-adenosyl-L-homocysteine into 5-methylthioinosine and S-inosyl-L-homocysteine, respectively. Is also able to deaminate adenosine. The protein is 5-methylthioadenosine/S-adenosylhomocysteine deaminase of Halobacterium salinarum (strain ATCC 700922 / JCM 11081 / NRC-1) (Halobacterium halobium).